Consider the following 429-residue polypeptide: Serine--tRNA ligase (429 aa).

Thr-236–Glu-238 contributes to the L-serine binding site. Arg-267–Glu-269 contributes to the ATP binding site. Glu-290 serves as a coordination point for L-serine. Glu-354–Ser-357 contacts ATP. Position 390 (Ser-390) interacts with L-serine.

It belongs to the class-II aminoacyl-tRNA synthetase family. Type-1 seryl-tRNA synthetase subfamily. In terms of assembly, homodimer. The tRNA molecule binds across the dimer.

The protein localises to the cytoplasm. It catalyses the reaction tRNA(Ser) + L-serine + ATP = L-seryl-tRNA(Ser) + AMP + diphosphate + H(+). It carries out the reaction tRNA(Sec) + L-serine + ATP = L-seryl-tRNA(Sec) + AMP + diphosphate + H(+). The protein operates within aminoacyl-tRNA biosynthesis; selenocysteinyl-tRNA(Sec) biosynthesis; L-seryl-tRNA(Sec) from L-serine and tRNA(Sec): step 1/1. Its function is as follows. Catalyzes the attachment of serine to tRNA(Ser). Is also able to aminoacylate tRNA(Sec) with serine, to form the misacylated tRNA L-seryl-tRNA(Sec), which will be further converted into selenocysteinyl-tRNA(Sec). This Photorhabdus laumondii subsp. laumondii (strain DSM 15139 / CIP 105565 / TT01) (Photorhabdus luminescens subsp. laumondii) protein is Serine--tRNA ligase.